The chain runs to 398 residues: Phosphoglycerate kinase (398 aa).

Residues 21–23 (DFN), Arg-36, 59–62 (HFGR), Arg-117, and Arg-150 each bind substrate. Residues Lys-200, Glu-321, and 351–354 (GGDS) contribute to the ATP site.

Belongs to the phosphoglycerate kinase family. Monomer.

The protein localises to the cytoplasm. The enzyme catalyses (2R)-3-phosphoglycerate + ATP = (2R)-3-phospho-glyceroyl phosphate + ADP. The protein operates within carbohydrate degradation; glycolysis; pyruvate from D-glyceraldehyde 3-phosphate: step 2/5. In Wolbachia sp. subsp. Drosophila simulans (strain wRi), this protein is Phosphoglycerate kinase.